The sequence spans 494 residues: Acetyl-coenzyme A carboxylase carboxyl transferase subunit beta, chloroplastic (494 aa).

The region spanning 230–494 (LWVQCENCYG…LHGFFPLNQN (265 aa)) is the CoA carboxyltransferase N-terminal domain. Zn(2+) contacts are provided by cysteine 234, cysteine 237, cysteine 253, and cysteine 256. A C4-type zinc finger spans residues 234–256 (CENCYGLNYKKFFRSKMNICEQC).

This sequence belongs to the AccD/PCCB family. Acetyl-CoA carboxylase is a heterohexamer composed of biotin carboxyl carrier protein, biotin carboxylase and 2 subunits each of ACCase subunit alpha and ACCase plastid-coded subunit beta (accD). Requires Zn(2+) as cofactor.

The protein resides in the plastid. Its subcellular location is the chloroplast stroma. It catalyses the reaction N(6)-carboxybiotinyl-L-lysyl-[protein] + acetyl-CoA = N(6)-biotinyl-L-lysyl-[protein] + malonyl-CoA. The protein operates within lipid metabolism; malonyl-CoA biosynthesis; malonyl-CoA from acetyl-CoA: step 1/1. Its function is as follows. Component of the acetyl coenzyme A carboxylase (ACC) complex. Biotin carboxylase (BC) catalyzes the carboxylation of biotin on its carrier protein (BCCP) and then the CO(2) group is transferred by the transcarboxylase to acetyl-CoA to form malonyl-CoA. This is Acetyl-coenzyme A carboxylase carboxyl transferase subunit beta, chloroplastic from Drimys granadensis.